A 579-amino-acid chain; its full sequence is Chromosomal replication initiator protein DnaA (579 aa).

The segment at Met1 to Thr71 is domain I, interacts with DnaA modulators. The tract at residues Thr71–Ser242 is domain II. 2 disordered regions span residues Ala131–His196 and Glu212–Glu240. Residues Ser171 to Ala183 show a composition bias toward low complexity. The interval Arg243–Ser459 is domain III, AAA+ region. Residues Gly287, Gly289, Lys290, and Thr291 each contribute to the ATP site. The domain IV, binds dsDNA stretch occupies residues Asn460–Gly579.

This sequence belongs to the DnaA family. Oligomerizes as a right-handed, spiral filament on DNA at oriC.

It localises to the cytoplasm. Its function is as follows. Plays an essential role in the initiation and regulation of chromosomal replication. ATP-DnaA binds to the origin of replication (oriC) to initiate formation of the DNA replication initiation complex once per cell cycle. Binds the DnaA box (a 9 base pair repeat at the origin) and separates the double-stranded (ds)DNA. Forms a right-handed helical filament on oriC DNA; dsDNA binds to the exterior of the filament while single-stranded (ss)DNA is stabiized in the filament's interior. The ATP-DnaA-oriC complex binds and stabilizes one strand of the AT-rich DNA unwinding element (DUE), permitting loading of DNA polymerase. After initiation quickly degrades to an ADP-DnaA complex that is not apt for DNA replication. Binds acidic phospholipids. The protein is Chromosomal replication initiator protein DnaA of Cupriavidus metallidurans (strain ATCC 43123 / DSM 2839 / NBRC 102507 / CH34) (Ralstonia metallidurans).